The sequence spans 250 residues: Triosephosphate isomerase (250 aa).

A substrate-binding site is contributed by 9–11 (NWK). His-96 acts as the Electrophile in catalysis. Residue Glu-166 is the Proton acceptor of the active site. Substrate is bound by residues Gly-172, Ser-212, and 233–234 (GG).

This sequence belongs to the triosephosphate isomerase family. Homodimer.

Its subcellular location is the cytoplasm. It catalyses the reaction D-glyceraldehyde 3-phosphate = dihydroxyacetone phosphate. The protein operates within carbohydrate biosynthesis; gluconeogenesis. It participates in carbohydrate degradation; glycolysis; D-glyceraldehyde 3-phosphate from glycerone phosphate: step 1/1. Functionally, involved in the gluconeogenesis. Catalyzes stereospecifically the conversion of dihydroxyacetone phosphate (DHAP) to D-glyceraldehyde-3-phosphate (G3P). The sequence is that of Triosephosphate isomerase from Chlorobium phaeobacteroides (strain BS1).